A 69-amino-acid polypeptide reads, in one-letter code: Large ribosomal subunit protein bL31 (69 aa).

Zn(2+) is bound by residues C16, C18, C36, and C39.

It belongs to the bacterial ribosomal protein bL31 family. Type A subfamily. In terms of assembly, part of the 50S ribosomal subunit. Zn(2+) serves as cofactor.

Its function is as follows. Binds the 23S rRNA. In Ruminiclostridium cellulolyticum (strain ATCC 35319 / DSM 5812 / JCM 6584 / H10) (Clostridium cellulolyticum), this protein is Large ribosomal subunit protein bL31.